We begin with the raw amino-acid sequence, 281 residues long: Undecaprenyl-diphosphatase (281 aa).

Helical transmembrane passes span methionine 1 to isoleucine 21, tryptophan 45 to alanine 65, serine 93 to phenylalanine 113, leucine 125 to valine 145, isoleucine 155 to alanine 175, alanine 195 to phenylalanine 215, phenylalanine 227 to phenylalanine 247, and serine 256 to phenylalanine 276.

The protein belongs to the UppP family.

Its subcellular location is the cell inner membrane. It carries out the reaction di-trans,octa-cis-undecaprenyl diphosphate + H2O = di-trans,octa-cis-undecaprenyl phosphate + phosphate + H(+). In terms of biological role, catalyzes the dephosphorylation of undecaprenyl diphosphate (UPP). Confers resistance to bacitracin. The chain is Undecaprenyl-diphosphatase from Syntrophobacter fumaroxidans (strain DSM 10017 / MPOB).